A 132-amino-acid polypeptide reads, in one-letter code: Small ribosomal subunit protein uS8 (132 aa).

The protein belongs to the universal ribosomal protein uS8 family. As to quaternary structure, part of the 30S ribosomal subunit. Contacts proteins S5 and S12.

In terms of biological role, one of the primary rRNA binding proteins, it binds directly to 16S rRNA central domain where it helps coordinate assembly of the platform of the 30S subunit. The polypeptide is Small ribosomal subunit protein uS8 (Clostridioides difficile (strain 630) (Peptoclostridium difficile)).